We begin with the raw amino-acid sequence, 60 residues long: UPF0434 protein ETA_21370 (60 aa).

It belongs to the UPF0434 family.

The chain is UPF0434 protein ETA_21370 from Erwinia tasmaniensis (strain DSM 17950 / CFBP 7177 / CIP 109463 / NCPPB 4357 / Et1/99).